We begin with the raw amino-acid sequence, 335 residues long: Serpentine receptor class alpha-13 (335 aa).

The Extracellular segment spans residues 1–25 (MAIISSVNRTCASESLLELYRSYKY). The chain crosses the membrane as a helical span at residues 26–46 (ILSTSFNIIIPIISLFFLVYA). Topologically, residues 47–61 (IKQLCAQSIIQYSTR) are cytoplasmic. A helical transmembrane segment spans residues 62-82 (VLLITTILFAVCHQIAYFCFK). Topologically, residues 83 to 108 (ADLLYTMLFKLDQPCNLQHSSYDCRF) are extracellular. Residues 109 to 129 (ITIATTTSNCGMALVQLAMSI) traverse the membrane as a helical segment. At 130-146 (DRVFALKFNRVYYKLKS) the chain is on the cytoplasmic side. Residues 147-167 (IPGITLALITLSISFSMFFIL) traverse the membrane as a helical segment. The Extracellular portion of the chain corresponds to 168-192 (TIDDPLSGYVNHCGFYPTYSQDKFH). The helical transmembrane segment at 193 to 213 (IFLDVTLYLAVFNFVFDIGLM) threads the bilayer. The Cytoplasmic portion of the chain corresponds to 214–243 (YYSYQEILWKRSYSFVNRFQSRISLKCTQA). The chain crosses the membrane as a helical span at residues 244 to 264 (IFIISICQCISNVLYSGLLSL). Topologically, residues 265-278 (LMKLGRYMSSADYN) are extracellular. Residues 279–299 (LSLSLAYTTPYSCLILPILIC) form a helical membrane-spanning segment. At 300–335 (KVLEYIKKQRTVGILSLRNQKQSMEGHMAMINSAWK) the chain is on the cytoplasmic side.

Belongs to the nematode receptor-like protein sra family. Expressed in the AWA and AWC chemosensory neurons.

The protein resides in the membrane. Functionally, chemosensory receptor that negatively regulates RAS/MAPK signaling during vulva induction and the negative regulation of olfaction of volitile attractants. Required for the suppression of vulval induction in response to food starvation. Signaling acts through the GPA-5 G-alpha protein subunit. The sequence is that of Serpentine receptor class alpha-13 (sra-13) from Caenorhabditis elegans.